The primary structure comprises 262 residues: Thiamine thiazole synthase (262 aa).

NAD(+) is bound by residues Ser40, 59–60 (ER), Gly67, Val133, and 159–161 (HID). Fe cation is bound by residues Asp161 and His176. NAD(+) contacts are provided by Ser179 and Met226. Arg236 is a binding site for glycine.

The protein belongs to the THI4 family. In terms of assembly, homooctamer; tetramer of dimers. Fe(2+) serves as cofactor.

It carries out the reaction hydrogen sulfide + glycine + NAD(+) = ADP-5-ethyl-4-methylthiazole-2-carboxylate + nicotinamide + 3 H2O + H(+). It functions in the pathway cofactor biosynthesis; thiamine diphosphate biosynthesis. Functionally, involved in the biosynthesis of the thiazole moiety of thiamine. Catalyzes the conversion of NAD and glycine to adenosine diphosphate 5-(2-hydroxyethyl)-4-methylthiazole-2-carboxylate (ADT), an adenylated thiazole intermediate, using free sulfide as a source of sulfur. The chain is Thiamine thiazole synthase from Methanococcus maripaludis (strain C7 / ATCC BAA-1331).